Consider the following 395-residue polypeptide: Flap endonuclease 1 (395 aa).

The N-domain stretch occupies residues 1–104; it reads MGIKQLFQII…GELAKRFQRK (104 aa). A Mg(2+)-binding site is contributed by aspartate 34. Arginine 47 and arginine 70 together coordinate DNA. Aspartate 86, glutamate 158, glutamate 160, aspartate 179, and aspartate 181 together coordinate Mg(2+). Positions 122–253 are I-domain; sequence DIEKFSRRTV…TTALKLIRDH (132 aa). Glutamate 158 lines the DNA pocket. DNA is bound by residues glycine 231 and aspartate 233. Position 233 (aspartate 233) interacts with Mg(2+). Residues 341–349 form an interaction with PCNA region; sequence QQARLEGFF. The segment at 344-395 is disordered; the sequence is RLEGFFKPVPKTDAQKAAHKRKLEEKNEEKKKKLKQEKKDKAAAKSKPRGAA. A compositionally biased stretch (basic and acidic residues) spans 365 to 386; the sequence is KLEEKNEEKKKKLKQEKKDKAA.

The protein belongs to the XPG/RAD2 endonuclease family. FEN1 subfamily. In terms of assembly, interacts with PCNA. Three molecules of FEN1 bind to one PCNA trimer with each molecule binding to one PCNA monomer. PCNA stimulates the nuclease activity without altering cleavage specificity. It depends on Mg(2+) as a cofactor. In terms of processing, phosphorylated. Phosphorylation upon DNA damage induces relocalization to the nuclear plasma.

The protein resides in the nucleus. It is found in the nucleolus. The protein localises to the nucleoplasm. Its subcellular location is the mitochondrion. Structure-specific nuclease with 5'-flap endonuclease and 5'-3' exonuclease activities involved in DNA replication and repair. During DNA replication, cleaves the 5'-overhanging flap structure that is generated by displacement synthesis when DNA polymerase encounters the 5'-end of a downstream Okazaki fragment. It enters the flap from the 5'-end and then tracks to cleave the flap base, leaving a nick for ligation. Also involved in the long patch base excision repair (LP-BER) pathway, by cleaving within the apurinic/apyrimidinic (AP) site-terminated flap. Acts as a genome stabilization factor that prevents flaps from equilibrating into structures that lead to duplications and deletions. Also possesses 5'-3' exonuclease activity on nicked or gapped double-stranded DNA, and exhibits RNase H activity. Also involved in replication and repair of rDNA and in repairing mitochondrial DNA. The sequence is that of Flap endonuclease 1 from Fusarium vanettenii (strain ATCC MYA-4622 / CBS 123669 / FGSC 9596 / NRRL 45880 / 77-13-4) (Fusarium solani subsp. pisi).